The primary structure comprises 169 residues: Ribosome maturation factor RimM (169 aa).

A PRC barrel domain is found at 96–169; sequence DGEYYWADLI…RILVDWGLDY (74 aa).

The protein belongs to the RimM family. As to quaternary structure, binds ribosomal protein uS19.

The protein localises to the cytoplasm. An accessory protein needed during the final step in the assembly of 30S ribosomal subunit, possibly for assembly of the head region. Essential for efficient processing of 16S rRNA. May be needed both before and after RbfA during the maturation of 16S rRNA. It has affinity for free ribosomal 30S subunits but not for 70S ribosomes. The protein is Ribosome maturation factor RimM of Chromobacterium violaceum (strain ATCC 12472 / DSM 30191 / JCM 1249 / CCUG 213 / NBRC 12614 / NCIMB 9131 / NCTC 9757 / MK).